A 281-amino-acid polypeptide reads, in one-letter code: MGVILEGKPVAEKLEKEIKEKIQFYKSQGVIPTLCIVKVGKNAEAEAYAKSIEKFFSKIGINIERKNFNEEISLVDFKKIMKELEEDSAIHGVLILRPLPEELERGKAFQFLPTKKDVEGVTYENLGRLLVGEDSFHPCTPQAVLELLDFYQIPVEGKNVVVVGRSISVGKPLSLLLLNRNATITVCHSKTKNLVEFTKKAEILIVAIGKPYFVGKDMVGEGQVIIDVGTNVVDGKLVGDVNFEEVKDKVEYITPVPGGIGVITTRVLAMNLLKAVKKVEA.

NADP(+) contacts are provided by residues 164 to 166, Ser-189, and Thr-230; that span reads GRS.

It belongs to the tetrahydrofolate dehydrogenase/cyclohydrolase family. As to quaternary structure, homodimer.

It catalyses the reaction (6R)-5,10-methylene-5,6,7,8-tetrahydrofolate + NADP(+) = (6R)-5,10-methenyltetrahydrofolate + NADPH. The enzyme catalyses (6R)-5,10-methenyltetrahydrofolate + H2O = (6R)-10-formyltetrahydrofolate + H(+). It functions in the pathway one-carbon metabolism; tetrahydrofolate interconversion. Functionally, catalyzes the oxidation of 5,10-methylenetetrahydrofolate to 5,10-methenyltetrahydrofolate and then the hydrolysis of 5,10-methenyltetrahydrofolate to 10-formyltetrahydrofolate. This chain is Bifunctional protein FolD, found in Dictyoglomus turgidum (strain DSM 6724 / Z-1310).